We begin with the raw amino-acid sequence, 374 residues long: Flagellar P-ring protein 1 (374 aa).

An N-terminal signal peptide occupies residues 1–29; sequence MPGVRWVRIVGVACAALSALALSVTSASA.

This sequence belongs to the FlgI family. In terms of assembly, the basal body constitutes a major portion of the flagellar organelle and consists of four rings (L,P,S, and M) mounted on a central rod.

Its subcellular location is the periplasm. The protein localises to the bacterial flagellum basal body. Functionally, assembles around the rod to form the L-ring and probably protects the motor/basal body from shearing forces during rotation. The chain is Flagellar P-ring protein 1 from Bradyrhizobium diazoefficiens (strain JCM 10833 / BCRC 13528 / IAM 13628 / NBRC 14792 / USDA 110).